The chain runs to 531 residues: Inactive beta-amylase 4, chloroplastic (531 aa).

A chloroplast-targeting transit peptide spans 1–62; sequence MTETGVIGCG…KRGRFITKLR (62 aa).

It belongs to the glycosyl hydrolase 14 family. Preferentially expressed in vascular tissue of cotyledons, leaves, petioles, stems, petals, siliques and roots, particularly in phloem. Also present in root tip.

It localises to the plastid. Its subcellular location is the chloroplast. Functionally, no alpha-1,4-glucan hydrolase activity, including beta-amylase, alpha-amylase, a-glucosidase or alpha-amyloglucosidase. However, facilitates or regulates starch breakdown, especially at night, by a mechanism involving direct interaction with starch or other alpha-1,4-glucan. The protein is Inactive beta-amylase 4, chloroplastic (BAM4) of Arabidopsis thaliana (Mouse-ear cress).